The sequence spans 270 residues: Diaminopimelate epimerase (270 aa).

The substrate site is built by N15, Q49, and N66. The active-site Proton donor is the C75. Substrate contacts are provided by residues 76-77 (GN), N155, N187, and 204-205 (ER). Residue C213 is the Proton acceptor of the active site. 214–215 (GS) is a binding site for substrate.

This sequence belongs to the diaminopimelate epimerase family. In terms of assembly, homodimer.

It localises to the cytoplasm. The catalysed reaction is (2S,6S)-2,6-diaminopimelate = meso-2,6-diaminopimelate. It functions in the pathway amino-acid biosynthesis; L-lysine biosynthesis via DAP pathway; DL-2,6-diaminopimelate from LL-2,6-diaminopimelate: step 1/1. In terms of biological role, catalyzes the stereoinversion of LL-2,6-diaminopimelate (L,L-DAP) to meso-diaminopimelate (meso-DAP), a precursor of L-lysine and an essential component of the bacterial peptidoglycan. This is Diaminopimelate epimerase from Rickettsia rickettsii (strain Iowa).